The chain runs to 158 residues: Cysteine-rich venom protein VAR7 (158 aa).

The signal sequence occupies residues 1–22; it reads MILLKLYLTLAAILCQSRGTTS. An SCP domain is found at 41–158; sequence NKHNDLRRTV…MGCAINLCPN (118 aa). C77 and C156 are joined by a disulfide.

It belongs to the CRISP family. In terms of processing, contains 8 disulfide bonds. As to expression, expressed by the venom gland.

It localises to the secreted. Functionally, blocks ryanodine receptors, and potassium channels. The protein is Cysteine-rich venom protein VAR7 of Varanus acanthurus (Ridge-tailed monitor).